The following is a 411-amino-acid chain: LL-diaminopimelate aminotransferase (411 aa).

Substrate is bound by residues Tyr-15 and Gly-42. Pyridoxal 5'-phosphate-binding positions include Tyr-72, 108–109 (SK), Tyr-132, Asn-187, Tyr-218, and 246–248 (SFS). Residues Lys-109, Tyr-132, and Asn-187 each contribute to the substrate site. Residue Lys-249 is modified to N6-(pyridoxal phosphate)lysine. Residues Arg-257 and Asn-292 each contribute to the pyridoxal 5'-phosphate site. Substrate contacts are provided by Asn-292 and Arg-388.

This sequence belongs to the class-I pyridoxal-phosphate-dependent aminotransferase family. LL-diaminopimelate aminotransferase subfamily. In terms of assembly, homodimer. The cofactor is pyridoxal 5'-phosphate.

It carries out the reaction (2S,6S)-2,6-diaminopimelate + 2-oxoglutarate = (S)-2,3,4,5-tetrahydrodipicolinate + L-glutamate + H2O + H(+). The protein operates within amino-acid biosynthesis; L-lysine biosynthesis via DAP pathway; LL-2,6-diaminopimelate from (S)-tetrahydrodipicolinate (aminotransferase route): step 1/1. Functionally, involved in the synthesis of meso-diaminopimelate (m-DAP or DL-DAP), required for both lysine and peptidoglycan biosynthesis. Catalyzes the direct conversion of tetrahydrodipicolinate to LL-diaminopimelate. The polypeptide is LL-diaminopimelate aminotransferase (Trichodesmium erythraeum (strain IMS101)).